The chain runs to 411 residues: Translation initiation factor 2 subunit gamma (411 aa).

The 193-residue stretch at 9–201 (QPTVNIGMVG…AIEKYIPTPE (193 aa)) folds into the tr-type G domain. The G1 stretch occupies residues 18 to 25 (GHVDHGKS). Mg(2+) is bound by residues aspartate 21, serine 25, glycine 46, and serine 48. 21–26 (DHGKST) provides a ligand contact to GTP. Positions 46 to 50 (GISIK) are G2. A G3 region spans residues 88-91 (DAPG). GTP-binding positions include 144–147 (NKID) and 179–181 (SAY). The G4 stretch occupies residues 144–147 (NKID). The segment at 179–181 (SAY) is G5.

This sequence belongs to the TRAFAC class translation factor GTPase superfamily. Classic translation factor GTPase family. EIF2G subfamily. In terms of assembly, heterotrimer composed of an alpha, a beta and a gamma chain. The cofactor is Mg(2+).

The catalysed reaction is GTP + H2O = GDP + phosphate + H(+). Functionally, eIF-2 functions in the early steps of protein synthesis by forming a ternary complex with GTP and initiator tRNA. The protein is Translation initiation factor 2 subunit gamma of Thermoplasma volcanium (strain ATCC 51530 / DSM 4299 / JCM 9571 / NBRC 15438 / GSS1).